The primary structure comprises 437 residues: Dihydrofolate synthase/folylpolyglutamate synthase (437 aa).

Residue 28–30 (DLG) participates in 7,8-dihydropteroate binding. Position 58–61 (58–61 (GKGT)) interacts with ATP. A Mg(2+)-binding site is contributed by Ser82. Residue 120–123 (TYFE) participates in 7,8-dihydropteroate binding. Residue Glu144 coordinates Mg(2+). 151–153 (LDA) contacts 7,8-dihydropteroate. Residue His171 coordinates Mg(2+). Residues Asn255, Arg287, and Asp316 each contribute to the ATP site.

The protein belongs to the folylpolyglutamate synthase family. In terms of assembly, monomer. Requires Mg(2+) as cofactor.

The enzyme catalyses 7,8-dihydropteroate + L-glutamate + ATP = 7,8-dihydrofolate + ADP + phosphate + H(+). It catalyses the reaction (6S)-5,6,7,8-tetrahydrofolyl-(gamma-L-Glu)(n) + L-glutamate + ATP = (6S)-5,6,7,8-tetrahydrofolyl-(gamma-L-Glu)(n+1) + ADP + phosphate + H(+). It carries out the reaction 10-formyltetrahydrofolyl-(gamma-L-Glu)(n) + L-glutamate + ATP = 10-formyltetrahydrofolyl-(gamma-L-Glu)(n+1) + ADP + phosphate + H(+). The catalysed reaction is (6R)-5,10-methylenetetrahydrofolyl-(gamma-L-Glu)(n) + L-glutamate + ATP = (6R)-5,10-methylenetetrahydrofolyl-(gamma-L-Glu)(n+1) + ADP + phosphate + H(+). It functions in the pathway cofactor biosynthesis; tetrahydrofolate biosynthesis; 7,8-dihydrofolate from 2-amino-4-hydroxy-6-hydroxymethyl-7,8-dihydropteridine diphosphate and 4-aminobenzoate: step 2/2. The protein operates within cofactor biosynthesis; tetrahydrofolylpolyglutamate biosynthesis. Its function is as follows. Functions in two distinct reactions of the de novo folate biosynthetic pathway. Catalyzes the addition of a glutamate residue to dihydropteroate (7,8-dihydropteroate or H2Pte) to form dihydrofolate (7,8-dihydrofolate monoglutamate or H2Pte-Glu). Also catalyzes successive additions of L-glutamate to tetrahydrofolate or 10-formyltetrahydrofolate or 5,10-methylenetetrahydrofolate, leading to folylpolyglutamate derivatives. The sequence is that of Dihydrofolate synthase/folylpolyglutamate synthase (folC) from Haemophilus influenzae (strain ATCC 51907 / DSM 11121 / KW20 / Rd).